Here is a 124-residue protein sequence, read N- to C-terminus: Glycine cleavage system H protein (124 aa).

The Lipoyl-binding domain occupies 22-103; it reads VFVVGITDNA…AYTAWIFKIK (82 aa). Lys-63 carries the post-translational modification N6-lipoyllysine.

This sequence belongs to the GcvH family. The glycine cleavage system is composed of four proteins: P, T, L and H. Requires (R)-lipoate as cofactor.

The glycine cleavage system catalyzes the degradation of glycine. The H protein shuttles the methylamine group of glycine from the P protein to the T protein. This is Glycine cleavage system H protein from Bordetella pertussis (strain Tohama I / ATCC BAA-589 / NCTC 13251).